The sequence spans 360 residues: MASATAPAAAVPTLASPLEQLRHLAEELRLLLPRVRVGEAQETTEEFNREMFWRRLNEAAVTVSREATTLTIVFSQLPLPSPQETQKFCEQVHAAIKAFIAVYYLLPKDQGITLRKLVRGATLDIVDGMAQLMEVLSVTPTQSPENNDLISYNSVWVACQQMPQIPRDNKAAALLMLTKNVDFVKDAHEEMEQAVEECDPYSGLLNDTEENNSDNHNHEDDVLGFPSNQDLYWSEDDQELIIPCLALVRASKACLKKIRMLVAENGKKDQVAQLDDIVDISDEISPSVDDLALSIYPPMCHLTVRINSAKLVSVLKKALEITKASHVTPQPEDSWIPLLINAIDHCMNRIKELTQSELEL.

The residue at position 2 (alanine 2) is an N-acetylalanine. 2 interaction with TCF3 regions span residues 2–184 (ASAT…VDFV) and 150–360 (ISYN…ELEL). Interaction with RPLP0 stretches follow at residues 2–190 (ASAT…AHEE) and 240–360 (LIIP…ELEL). The interval 2-208 (ASATAPAAAV…DPYSGLLNDT (207 aa)) is required for interaction with CCND1.

This sequence belongs to the CCNDBP1 family. In terms of assembly, interacts with CCND1 and GRAP2. May also interact with COPS5, RPLP0, SIRT6, SYF2 and TCF3. In terms of processing, phosphorylated. As to expression, ubiquitously expressed. Expression is down-regulated in a variety of tumor types including breast, colon, prostate and rectal tumors, and is up-regulated in certain hepatic carcinomas.

It is found in the cytoplasm. It localises to the nucleus. May negatively regulate cell cycle progression. May act at least in part via inhibition of the cyclin-D1/CDK4 complex, thereby preventing phosphorylation of RB1 and blocking E2F-dependent transcription. The protein is Cyclin-D1-binding protein 1 (CCNDBP1) of Homo sapiens (Human).